A 628-amino-acid chain; its full sequence is 1-deoxy-D-xylulose-5-phosphate synthase (628 aa).

Residues His80 and 121-123 (GHS) each bind thiamine diphosphate. Residue Asp152 coordinates Mg(2+). Residues 153–154 (GG), Asn181, Tyr289, and Glu370 each bind thiamine diphosphate. Asn181 is a binding site for Mg(2+).

Belongs to the transketolase family. DXPS subfamily. As to quaternary structure, homodimer. Mg(2+) is required as a cofactor. The cofactor is thiamine diphosphate.

The enzyme catalyses D-glyceraldehyde 3-phosphate + pyruvate + H(+) = 1-deoxy-D-xylulose 5-phosphate + CO2. The protein operates within metabolic intermediate biosynthesis; 1-deoxy-D-xylulose 5-phosphate biosynthesis; 1-deoxy-D-xylulose 5-phosphate from D-glyceraldehyde 3-phosphate and pyruvate: step 1/1. Catalyzes the acyloin condensation reaction between C atoms 2 and 3 of pyruvate and glyceraldehyde 3-phosphate to yield 1-deoxy-D-xylulose-5-phosphate (DXP). In Alkalilimnicola ehrlichii (strain ATCC BAA-1101 / DSM 17681 / MLHE-1), this protein is 1-deoxy-D-xylulose-5-phosphate synthase.